The chain runs to 223 residues: MDLASLRAQQIELASSVIREDRLDKDPPDLIAGADVGFEQGGEVTRAAMVLLKYPSLELVEYKVARIATTMPYIPGFLSFREYPALLAAWEMLSQKPDLVFVDGHGISHPRRLGVASHFGLLVDVPTIGVAKKRLCGKFEPLPSEPGALAPLMDKGEQLAWVWRSKARCNPLFIATGHRVSVDSALAWVQRCMKGYRLPEPTRWADAVASERPAFVSYTANQP.

Residues aspartate 35 and aspartate 103 each coordinate Mg(2+).

This sequence belongs to the endonuclease V family. It depends on Mg(2+) as a cofactor.

Its subcellular location is the cytoplasm. The enzyme catalyses Endonucleolytic cleavage at apurinic or apyrimidinic sites to products with a 5'-phosphate.. In terms of biological role, DNA repair enzyme involved in the repair of deaminated bases. Selectively cleaves double-stranded DNA at the second phosphodiester bond 3' to a deoxyinosine leaving behind the intact lesion on the nicked DNA. This is Endonuclease V from Shigella dysenteriae serotype 1 (strain Sd197).